The chain runs to 226 residues: UPF0111 protein AF_1799 (226 aa).

The protein belongs to the UPF0111 family.

The chain is UPF0111 protein AF_1799 from Archaeoglobus fulgidus (strain ATCC 49558 / DSM 4304 / JCM 9628 / NBRC 100126 / VC-16).